The chain runs to 465 residues: L-seryl-tRNA(Sec) selenium transferase (465 aa).

At Lys294 the chain carries N6-(pyridoxal phosphate)lysine.

This sequence belongs to the SelA family. Pyridoxal 5'-phosphate serves as cofactor.

Its subcellular location is the cytoplasm. It carries out the reaction L-seryl-tRNA(Sec) + selenophosphate + H(+) = L-selenocysteinyl-tRNA(Sec) + phosphate. Its pathway is aminoacyl-tRNA biosynthesis; selenocysteinyl-tRNA(Sec) biosynthesis; selenocysteinyl-tRNA(Sec) from L-seryl-tRNA(Sec) (bacterial route): step 1/1. Its function is as follows. Converts seryl-tRNA(Sec) to selenocysteinyl-tRNA(Sec) required for selenoprotein biosynthesis. This is L-seryl-tRNA(Sec) selenium transferase from Maridesulfovibrio salexigens (strain ATCC 14822 / DSM 2638 / NCIMB 8403 / VKM B-1763) (Desulfovibrio salexigens).